The chain runs to 218 residues: Protein-L-isoaspartate O-methyltransferase (218 aa).

Serine 66 is a catalytic residue.

It belongs to the methyltransferase superfamily. L-isoaspartyl/D-aspartyl protein methyltransferase family.

Its subcellular location is the cytoplasm. The enzyme catalyses [protein]-L-isoaspartate + S-adenosyl-L-methionine = [protein]-L-isoaspartate alpha-methyl ester + S-adenosyl-L-homocysteine. In terms of biological role, catalyzes the methyl esterification of L-isoaspartyl residues in peptides and proteins that result from spontaneous decomposition of normal L-aspartyl and L-asparaginyl residues. It plays a role in the repair and/or degradation of damaged proteins. This Caulobacter sp. (strain K31) protein is Protein-L-isoaspartate O-methyltransferase.